Here is a 224-residue protein sequence, read N- to C-terminus: 7-cyano-7-deazaguanine synthase (224 aa).

An ATP-binding site is contributed by 10–20 (FSGGQDSTTCL). The Zn(2+) site is built by C193, C201, C204, and C207.

It belongs to the QueC family. Zn(2+) is required as a cofactor.

It carries out the reaction 7-carboxy-7-deazaguanine + NH4(+) + ATP = 7-cyano-7-deazaguanine + ADP + phosphate + H2O + H(+). It participates in purine metabolism; 7-cyano-7-deazaguanine biosynthesis. In terms of biological role, catalyzes the ATP-dependent conversion of 7-carboxy-7-deazaguanine (CDG) to 7-cyano-7-deazaguanine (preQ(0)). The sequence is that of 7-cyano-7-deazaguanine synthase from Neisseria gonorrhoeae (strain ATCC 700825 / FA 1090).